Consider the following 269-residue polypeptide: Formamidopyrimidine-DNA glycosylase (269 aa).

Pro2 (schiff-base intermediate with DNA) is an active-site residue. Glu3 acts as the Proton donor in catalysis. Lys57 acts as the Proton donor; for beta-elimination activity in catalysis. DNA-binding residues include His90, Arg109, and Arg150. The FPG-type zinc finger occupies 235-269 (QVYGRAGEACLTCGTTIKRSKHGQRTTFYCPHCQR). The Proton donor; for delta-elimination activity role is filled by Arg259.

This sequence belongs to the FPG family. As to quaternary structure, monomer. The cofactor is Zn(2+).

It catalyses the reaction Hydrolysis of DNA containing ring-opened 7-methylguanine residues, releasing 2,6-diamino-4-hydroxy-5-(N-methyl)formamidopyrimidine.. The catalysed reaction is 2'-deoxyribonucleotide-(2'-deoxyribose 5'-phosphate)-2'-deoxyribonucleotide-DNA = a 3'-end 2'-deoxyribonucleotide-(2,3-dehydro-2,3-deoxyribose 5'-phosphate)-DNA + a 5'-end 5'-phospho-2'-deoxyribonucleoside-DNA + H(+). Involved in base excision repair of DNA damaged by oxidation or by mutagenic agents. Acts as a DNA glycosylase that recognizes and removes damaged bases. Has a preference for oxidized purines, such as 7,8-dihydro-8-oxoguanine (8-oxoG). Has AP (apurinic/apyrimidinic) lyase activity and introduces nicks in the DNA strand. Cleaves the DNA backbone by beta-delta elimination to generate a single-strand break at the site of the removed base with both 3'- and 5'-phosphates. This chain is Formamidopyrimidine-DNA glycosylase, found in Edwardsiella ictaluri (strain 93-146).